The primary structure comprises 209 residues: Protein-L-isoaspartate O-methyltransferase (209 aa).

Serine 59 is an active-site residue.

The protein belongs to the methyltransferase superfamily. L-isoaspartyl/D-aspartyl protein methyltransferase family.

It localises to the cytoplasm. The catalysed reaction is [protein]-L-isoaspartate + S-adenosyl-L-methionine = [protein]-L-isoaspartate alpha-methyl ester + S-adenosyl-L-homocysteine. Its function is as follows. Catalyzes the methyl esterification of L-isoaspartyl residues in peptides and proteins that result from spontaneous decomposition of normal L-aspartyl and L-asparaginyl residues. It plays a role in the repair and/or degradation of damaged proteins. This chain is Protein-L-isoaspartate O-methyltransferase, found in Helicobacter pylori (strain P12).